The chain runs to 287 residues: 4-hydroxybenzoate octaprenyltransferase (287 aa).

5 consecutive transmembrane segments (helical) span residues 20 to 38 (IGTL…FAAG), 95 to 115 (IVFL…NPLV), 211 to 231 (IIAA…LIAE), 235 to 255 (IYGG…KLIF), and 266 to 286 (FLNN…DYLV).

Belongs to the UbiA prenyltransferase family. Mg(2+) serves as cofactor.

It localises to the cell inner membrane. It catalyses the reaction all-trans-octaprenyl diphosphate + 4-hydroxybenzoate = 4-hydroxy-3-(all-trans-octaprenyl)benzoate + diphosphate. Its pathway is cofactor biosynthesis; ubiquinone biosynthesis. In terms of biological role, catalyzes the prenylation of para-hydroxybenzoate (PHB) with an all-trans polyprenyl group. Mediates the second step in the final reaction sequence of ubiquinone-8 (UQ-8) biosynthesis, which is the condensation of the polyisoprenoid side chain with PHB, generating the first membrane-bound Q intermediate 3-octaprenyl-4-hydroxybenzoate. This chain is 4-hydroxybenzoate octaprenyltransferase, found in Shewanella piezotolerans (strain WP3 / JCM 13877).